A 71-amino-acid chain; its full sequence is uncharacterized protein (71 aa).

The segment at 1 to 71 is disordered; sequence MLFETLKSLS…AFFSRPFYSE (71 aa). Over residues 7 to 33 the composition is skewed to polar residues; that stretch reads KSLSQQNGGQFSDEQSFESPISSSFNG. Positions 35–65 are enriched in low complexity; sequence SMPFGSPSSTMSSSYKGNTNSSTKSSSAFFS.

This is an uncharacterized protein from Dictyostelium discoideum (Social amoeba).